The following is a 125-amino-acid chain: Cu-Zn superoxide dismutase-like protein (125 aa).

A disulfide bridge connects residues Cys-52 and Cys-102.

The protein belongs to the Cu-Zn superoxide dismutase family.

The protein resides in the host cytoplasm. Functionally, virion protein with no enzymatic activity. The sequence is that of Cu-Zn superoxide dismutase-like protein from Camelpox virus (strain M-96).